An 818-amino-acid polypeptide reads, in one-letter code: MSSSSAASIGPPQPPPPPAPPEEEKKCLNSELWHACAGPLVCLPTVGTRVVYFPQGHSEQVAASTNKEVEGHIPNYPNLPAQLICQLHDVTMHADVETDEVYAQMTLQPLNPQEQNDAYLPAEMGIMSKQPTNYFCKTLTASDTSTHGGFSVPRRAAERVFPPLDFTQQPPAQELIARDIHDIEWKFRHIFRGQPKRHLLTTGWSVFVSAKRLVAGDSVLFIWNEKNQLLLGIRRASRPQTVMPSSVLSSDSMHIGLLAAAAHAAATNSRFTIFYNPRASPSEFVIPLSKYIKAVFHTRISVGMRFRMLFETEESSVRRYMGTITEVSDADPVRWPSSYWRSVKVGWDESTAGERPPRVSLWEIEPLTTFPMYPSLFPLRVKHPWYSGVASLHDDSNALMWLRGVAGEGGFQSLNFQSPGIGSWGQQRLHPSLLSSDHDQYQAVVAAAAASQSGGYLKQQFLHLQQPMQSPQEHCNLNPLLQQQILQQASQQQIINPDAQNIQTMLSPSAIQQQLQQLQQMQQVQNDQKQKIQPDQSYQVPTSAVLPSPTSLPSHLREKFGFSDPNANSSSFITSSSSDNMLDSSFLQGSSKAVDLSRFNQPVASEQQQQQQQAWKQKFMGSQSVSFGGSVLHNSPTSKDGSVENKIGRDVQNQSLFSPQVDSSSLLYNMVPNLTSNVSDGNLSTIPSGSTYLQNAMYGCLDDSSGLLQNTGENDPATRTFVKVYKSGSVGRSLDITRFSNYAELREELGQMFGIKGQLDDPDRSGWQLVFVDRENDVLLLGDDPWESFVNSVWYIKILSPEDVHKMGKQGNDPRYLS.

Over residues 1–10 (MSSSSAASIG) the composition is skewed to low complexity. The segment at 1-24 (MSSSSAASIGPPQPPPPPAPPEEE) is disordered. Residues 11 to 20 (PPQPPPPPAP) show a composition bias toward pro residues. Positions 135–237 (FCKTLTASDT…QLLLGIRRAS (103 aa)) form a DNA-binding region, TF-B3. Disordered regions lie at residues 526-565 (NDQK…FSDP) and 629-648 (GSVL…NKIG). Residues 629–640 (GSVLHNSPTSKD) show a composition bias toward polar residues. Residues 719–803 (RTFVKVYKSG…WYIKILSPED (85 aa)) enclose the PB1 domain.

The protein belongs to the ARF family. As to quaternary structure, homodimers and heterodimers. In terms of tissue distribution, expressed in roots, culms, leaves and young panicles.

The protein localises to the nucleus. In terms of biological role, auxin response factors (ARFs) are transcriptional factors that bind specifically to the DNA sequence 5'-TGTCTC-3' found in the auxin-responsive promoter elements (AuxREs). The sequence is that of Auxin response factor 12 (ARF12) from Oryza sativa subsp. japonica (Rice).